Reading from the N-terminus, the 551-residue chain is Colicin E3 (551 aa).

Disordered regions lie at residues 1–74 (MSGG…SGGG), 243–269 (TLSP…NTRD), and 293–320 (PDQV…EAAE). The segment at 1-315 (MSGGDGRGHN…RQQEWDATHP (315 aa)) is translocation (T) domain. Over residues 20-35 (INGGPTGLGVGGGASD) the composition is skewed to gly residues. Positions 35–39 (DGSGW) match the Binds to TolB motif. Positions 36 to 45 (GSGWSSENNP) are enriched in low complexity. Positions 46-74 (WGGGSGSGIHWGGGSGHGNGGGNGNSGGG) are enriched in gly residues. Over residues 296 to 320 (VKQRQDEENRRQQEWDATHPVEAAE) the composition is skewed to basic and acidic residues. Residues 316 to 378 (VEAAERNYER…IAEIKQFNRF (63 aa)) adopt a coiled-coil conformation. Residues 316–450 (VEAAERNYER…SAENNLNDEK (135 aa)) are receptor-binding (R) domain. Residues 379-385 (AHDPMAG) carry the Hairpin motif. Residues 386 to 450 (GHRMWQMAGL…SAENNLNDEK (65 aa)) adopt a coiled-coil conformation. Residues 406 to 505 (NKQAAFDAAA…KRWTGDKGRK (100 aa)) form a disordered region. Basic and acidic residues predominate over residues 430-472 (ESRKKKEDKKRSAENNLNDEKNKPRKGFKDYGHDYHPAPKTEN). Residues 451–456 (NKPRKG) are linker. A ribosome inactivating activity region spans residues 455-551 (KGFKDYGHDY…DPKRNIKKYL (97 aa)). Residues 457–551 (FKDYGHDYHP…DPKRNIKKYL (95 aa)) are cytotoxic RNase (C) domain. Histidine 513 (proton donor) is an active-site residue. Glutamate 517 serves as the catalytic Proton acceptor. Positions 517-551 (EGYRASDGQHLGSFDPKTGNQLKGPDPKRNIKKYL) are disordered. A binding of immunity protein region spans residues 530–551 (FDPKTGNQLKGPDPKRNIKKYL). Arginine 545 is an active-site residue.

The protein belongs to the cloacin colicin family. As to quaternary structure, native colicin E3 is a 1:1 complex of A chain and protein B (cognate immunity protein, Im3); protein A is 1,000-fold more active in inactivating ribosomes than the native complex. The cytotoxic fragment (residues 456-551, C95) forms a 1:1 complex with Im3. The receptor-binding (R) domain binds obliquely to its receptor BtuB without displacing BtuB's central plug; binding unfolds the R domain. The N-terminal 83 residues (T83) bind OmpF; trimeric complexes with colicin E3, BtuB and OmpF can be cross-linked and immunoprecipitated. Probably inserts into the OmpF pore as an unfolded peptide and spans the OmpF pore. In a complex with T.thermophilus 70S ribosomes, cytotoxic fragment C96 contacts 16S rRNA, 23S rRNA, mRNA, P-site tRNA and ribosomal protein uS12.

The protein resides in the secreted. In terms of biological role, colicins are polypeptide toxins produced by and active against E.coli and closely related bacteria. Cleaves 16S rRNA between adenosine-1492 and guanosine-1493 (E.coli 16S rRNA numbering), releasing a 49 nucleotide (nt) 'colicin' fragment. Inactivates 70S ribosomes or 30S subunits by endonucleolytically cleaving 16S RNA at a specific site about 50 nt from its C-terminus. Produces 5'-OH-guanosine and a 2',3'-cyclic phosphate adenosine. Mixing a susceptible (e.g. strain K12 / A19) and colicin E3 producing strain results in total protein translation inhibition within 11 minutes. Its activity is inhibited by cognate immunity protein Im3. Its function is as follows. Uses BtuB, the vitamin B transporter, as a receptor on the outer membrane; binds via the receptor (R) domain. Then the translocation domain (T) probably 'fishes' for its outer membrane translocon protein, OmpF. The N-terminal 83 residues (T83) can bind to and occlude OmpF channels. A complex of the cytotoxic C-terminal 96 residues (C96) plus the immunity protein does not occlude OmpF; upon complex separation from the immunity protein C96 becomes disordered and is able to bind OmpF. The N-terminus probably binds TolB and then reinserts into an empty pore of trimeric OmpF; the rest of the protein is pulled through OmpF and crosses the inner membrane, where the cytotoxic fragment is probably released by protease FtsH. This is Colicin E3 (ceaC) from Escherichia coli.